Here is a 216-residue protein sequence, read N- to C-terminus: Uracil phosphoribosyltransferase (216 aa).

Residues R85, R110, and 135-143 (DPMVATGYS) contribute to the 5-phospho-alpha-D-ribose 1-diphosphate site. Uracil is bound by residues I200 and 205-207 (GDA). Residue D206 participates in 5-phospho-alpha-D-ribose 1-diphosphate binding.

This sequence belongs to the UPRTase family. Requires Mg(2+) as cofactor.

It catalyses the reaction UMP + diphosphate = 5-phospho-alpha-D-ribose 1-diphosphate + uracil. It participates in pyrimidine metabolism; UMP biosynthesis via salvage pathway; UMP from uracil: step 1/1. Its activity is regulated as follows. Allosterically activated by GTP. In terms of biological role, catalyzes the conversion of uracil and 5-phospho-alpha-D-ribose 1-diphosphate (PRPP) to UMP and diphosphate. The protein is Uracil phosphoribosyltransferase of Burkholderia thailandensis (strain ATCC 700388 / DSM 13276 / CCUG 48851 / CIP 106301 / E264).